Here is a 367-residue protein sequence, read N- to C-terminus: MGDLPTSQQALKVASSGRVILETGHPLPELGADEVLVRVACVALNPYDAKSVDMSPSPGATAGLDFAGEIVALGEAVNSSTRLAVGKRVCGFVFGNNPDRRDNGAFAEYVAVPASLVLCIPDSMTFLEAATLPCGLATTGTALYNSHNLGLPLLRPGSEVNSSNKSSTYVLVYGGGTATATIIIQVLRRSGFIPITTSSPHNFNRLQQLGAEATFDYHSPTCGSDLRDYTHNRLAFAIDCISSTDSMQICYEAIGTAGGRYVSLDPFPLNKHTRRSIRPVWLFSFTIFGSAIKWDTPYNFPARPDDRESAERWYAEIEAILATGELVTHPFQEETGGLSSVIDGIGAVRNGQITGYKLVYPIRNCAY.

NADP(+)-binding positions include 47 to 50, 199 to 202, tyrosine 217, 264 to 265, and 353 to 354; these read YDAK, SPHN, LD, and IT.

Belongs to the zinc-containing alcohol dehydrogenase family. In terms of assembly, monomer.

Its pathway is secondary metabolite biosynthesis. Functionally, trans-enoyl reductase; part of the gene cluster that mediates the biosynthesis of oxopyrrolidines, polyketide-amino acid hybrid compounds with feature structures of tetramic acid. The polyketide chain is first assembled by the highly reducing PKS module of opdA using acetyl-CoA as the starter unit and five malonyl-CoA as the extender units. OpdC acts as a trans-acting enoyl reductase and reduces the terminal alkenyl to alkane. The 17R in oxopyrrolidine A and 15R, 17S in oxopyrrolidine B are generated by non-stereospecific catalysis of the ketoreductase (KR) domain and enoyl reductases. Then the polyketides with specific configurations are transferred to the NRPS module of opdA and linked to L-tyrosine to form an amide bond. Finally, the oxopyrrolidines are offloaded through a Dieckmann cyclization catalyzed by the terminal D domain to give a tetramic acid moiety. This chain is Trans-enoyl reductase opdC, found in Penicillium oxalicum (strain 114-2 / CGMCC 5302) (Penicillium decumbens).